We begin with the raw amino-acid sequence, 378 residues long: Beta-1,3-galactosyltransferase 4 (378 aa).

The Cytoplasmic segment spans residues Met-1–Arg-8. Residues Leu-9–Val-19 form a helical; Signal-anchor for type II membrane protein membrane-spanning segment. Over Trp-20–Ser-378 the chain is Lumenal. N-linked (GlcNAc...) asparagine glycosylation is present at Asn-149.

Belongs to the glycosyltransferase 31 family. In terms of tissue distribution, highly expressed in heart, skeletal muscle and pancreas and, to a lesser extent, in brain, placenta, kidney, liver and lung.

Its subcellular location is the golgi apparatus membrane. It carries out the reaction a ganglioside GM2 (d18:1(4E)) + UDP-alpha-D-galactose = a ganglioside GM1 (d18:1(4E)) + UDP + H(+). The enzyme catalyses a ganglioside GM2 + UDP-alpha-D-galactose = a ganglioside GM1 + UDP + H(+). The catalysed reaction is a ganglioside GD2 (d18:1(4E)) + UDP-alpha-D-galactose = a ganglioside GD1b (d18:1(4E)) + UDP + H(+). It catalyses the reaction a ganglioside GA2 (d18:1(4E)) + UDP-alpha-D-galactose = a ganglioside GA1 (d18:1(4E)) + UDP + H(+). It participates in protein modification; protein glycosylation. In terms of biological role, involved in GM1/GD1B/GA1 ganglioside biosynthesis. In Homo sapiens (Human), this protein is Beta-1,3-galactosyltransferase 4.